We begin with the raw amino-acid sequence, 430 residues long: N-lysine methyltransferase SMYD2-A (430 aa).

An SET domain is found at 5 to 239 (EGLERFDSPG…AGDEVFTSYI (235 aa)). Residue 15–17 (KGR) coordinates S-adenosyl-L-methionine. Positions 50, 53, 63, 66, 72, 76, 84, and 88 each coordinate Zn(2+). The segment at 50 to 88 (CDFCFARKEGLSKCGKCKQAFYCNVDCQKGDWPMHKLEC) adopts an MYND-type zinc-finger fold. S-adenosyl-L-methionine is bound by residues histidine 135, 204–205 (NH), and 256–258 (YFF).

This sequence belongs to the class V-like SAM-binding methyltransferase superfamily.

The protein localises to the cytoplasm. It is found in the cytosol. It localises to the nucleus. The catalysed reaction is L-lysyl(4)-[histone H3] + 3 S-adenosyl-L-methionine = N(6),N(6),N(6)-trimethyl-L-lysyl(4)-[histone H3] + 3 S-adenosyl-L-homocysteine + 3 H(+). The enzyme catalyses L-lysyl-[protein] + S-adenosyl-L-methionine = N(6)-methyl-L-lysyl-[protein] + S-adenosyl-L-homocysteine + H(+). In terms of biological role, protein-lysine N-methyltransferase that methylates both histones and non-histone proteins, including p53/TP53 and RB1. Specifically trimethylates histone H3 'Lys-4' (H3K4me3) in vivo. The activity requires interaction with HSP90alpha. Shows even higher methyltransferase activity on p53/TP53. Monomethylates 'Lys-370' of p53/TP53, leading to decreased DNA-binding activity and subsequent transcriptional regulation activity of p53/TP53. Monomethylates RB1 at 'Lys-860'. The polypeptide is N-lysine methyltransferase SMYD2-A (smyd2-a) (Xenopus laevis (African clawed frog)).